The following is a 502-amino-acid chain: NAD(P)H-quinone oxidoreductase chain 4, chloroplastic (502 aa).

13 helical membrane-spanning segments follow: residues 4-24 (YPWLTIIVLLPIPAGLLIPLL), 39-59 (LGICLLEFLLITHTFCYHFDI), 89-109 (IGLTPLTGFVTTLATLAAWPV), 115-132 (LFHSSMLAMYSGQVGLFT), 136-156 (ILLFFLMWELELIPVYLLLSM), 169-189 (FILYTAGGSIPLLIGALTMGL), 209-229 (IALEIVLYLSFFVAYAVKLPI), 244-264 (HYSTCMLLAGILLKMGGYGLI), 276-296 (SIFAPWLVIVGAFQIVYAASI), 315-335 (MGFVLIGIGSATNIGLNGAIL), 387-407 (SLALPGTSGFAAESMVFPGIV), 418-438 (IIITIVEAIGIILTPIYLLSM), and 466-486 (IFISICLLLPTIGIGLYPNLI).

The protein belongs to the complex I subunit 4 family.

It localises to the plastid. Its subcellular location is the chloroplast thylakoid membrane. It carries out the reaction a plastoquinone + NADH + (n+1) H(+)(in) = a plastoquinol + NAD(+) + n H(+)(out). The catalysed reaction is a plastoquinone + NADPH + (n+1) H(+)(in) = a plastoquinol + NADP(+) + n H(+)(out). This chain is NAD(P)H-quinone oxidoreductase chain 4, chloroplastic, found in Huperzia lucidula (Shining clubmoss).